We begin with the raw amino-acid sequence, 320 residues long: Olfactory receptor 2AT4 (320 aa).

At 1 to 31 (MDATACNESVDGSPVFYLLGIPSLPETFFLP) the chain is on the extracellular side. N-linked (GlcNAc...) asparagine glycosylation is present at Asn-7. A helical transmembrane segment spans residues 32–52 (VFFIFLLFYLLILMGNALILV). Over 53-62 (AVVAEPSLHK) the chain is Cytoplasmic. Residues 63–83 (PMYFFLINLSTLDILFTTTTV) traverse the membrane as a helical segment. Residues 84–102 (PKMLSLFLLGDRFLSFSSC) are Extracellular-facing. Cys-102 and Cys-184 are disulfide-bonded. A helical membrane pass occupies residues 103–123 (LLQMYLFQSFTCSEAFILVVM). The Cytoplasmic segment spans residues 124 to 145 (AYDRYVAICHPLHYPVLMNPQT). A helical membrane pass occupies residues 146-166 (NATLAASAWLTALLLPIPAVV). Over 167–200 (RTSQMAYNSIAYIYHCFCDHLAVVQASCSDTTPQ) the chain is Extracellular. The helical transmembrane segment at 201-221 (TLMGFCIAMVVSFLPLLLVLL) threads the bilayer. Residues 222–245 (SYVHILASVLRISSLEGRAKAFST) are Cytoplasmic-facing. Residues 246–266 (CSSHLLVVGTYYSSIAIAYVA) traverse the membrane as a helical segment. Residues 267–276 (YRADLPLDFH) are Extracellular-facing. A helical membrane pass occupies residues 277–297 (IMGNVVYAILTPILNPLIYTL). The Cytoplasmic segment spans residues 298–320 (RNRDVKAAITKIMSQDPGCDRSI).

The protein belongs to the G-protein coupled receptor 1 family. Detected in the keratinocytes of the epidermis (at protein level). Detected in hair follicles in proximal outer root sheath and hair matrix keratinocytes (at protein level).

Its subcellular location is the cell membrane. Olfactory receptor. Activated by the synthetic sandalwood odorant sandalore. Endogenous ligand is unknown. The activity of this receptor is probably mediated by G proteins which induce elevation of intracellular Ca(2+), a cAMP-dependent pathway and phosphorylation of MAPK1/ERK2, MAPK3/ERK1 and p38 MAPKs. Activation of OR2AT4 induces proliferation, migration, and re-epithelialization during wound-healing processes of keratinocytes. Stimulation of OR2AT4 by sandalore promotes hair growth by decreasing apoptosis and increasing production of the anagen-prolonging growth factor IGF1 as well as other pathways involving various kinases. This Homo sapiens (Human) protein is Olfactory receptor 2AT4.